The following is an 804-amino-acid chain: Type 2 DNA topoisomerase 6 subunit B (804 aa).

ATP contacts are provided by residues Asn58, Asp89, 110–111 (SR), 120–127 (GQQGIGIS), and Lys629.

It belongs to the TOP6B family. In terms of assembly, homodimer. Heterotetramer of two Top6A and two Top6B chains.

It carries out the reaction ATP-dependent breakage, passage and rejoining of double-stranded DNA.. Functionally, relaxes both positive and negative superturns and exhibits a strong decatenase activity. In Halobacterium salinarum (strain ATCC 29341 / DSM 671 / R1), this protein is Type 2 DNA topoisomerase 6 subunit B.